We begin with the raw amino-acid sequence, 119 residues long: Aspartate 1-decarboxylase (119 aa).

The Schiff-base intermediate with substrate; via pyruvic acid role is filled by Ser25. Ser25 bears the Pyruvic acid (Ser) mark. A substrate-binding site is contributed by Thr57. The active-site Proton donor is Tyr58. Residue 73-75 coordinates substrate; the sequence is GAA.

Belongs to the PanD family. As to quaternary structure, heterooctamer of four alpha and four beta subunits. Pyruvate serves as cofactor. In terms of processing, is synthesized initially as an inactive proenzyme, which is activated by self-cleavage at a specific serine bond to produce a beta-subunit with a hydroxyl group at its C-terminus and an alpha-subunit with a pyruvoyl group at its N-terminus.

It is found in the cytoplasm. The catalysed reaction is L-aspartate + H(+) = beta-alanine + CO2. It participates in cofactor biosynthesis; (R)-pantothenate biosynthesis; beta-alanine from L-aspartate: step 1/1. Catalyzes the pyruvoyl-dependent decarboxylation of aspartate to produce beta-alanine. In Thermosipho melanesiensis (strain DSM 12029 / CIP 104789 / BI429), this protein is Aspartate 1-decarboxylase.